Consider the following 89-residue polypeptide: uncharacterized protein (89 aa).

Residues 28–50 traverse the membrane as a helical segment; sequence LYLDLGFSALLFYNSNLLFSFIL.

The protein localises to the membrane. This is an uncharacterized protein from Archaeoglobus fulgidus (strain ATCC 49558 / DSM 4304 / JCM 9628 / NBRC 100126 / VC-16).